Here is a 306-residue protein sequence, read N- to C-terminus: UDP-3-O-acyl-N-acetylglucosamine deacetylase (306 aa).

His-79, His-239, and Asp-243 together coordinate Zn(2+). His-266 serves as the catalytic Proton donor.

Belongs to the LpxC family. Zn(2+) is required as a cofactor.

It catalyses the reaction a UDP-3-O-[(3R)-3-hydroxyacyl]-N-acetyl-alpha-D-glucosamine + H2O = a UDP-3-O-[(3R)-3-hydroxyacyl]-alpha-D-glucosamine + acetate. Its pathway is glycolipid biosynthesis; lipid IV(A) biosynthesis; lipid IV(A) from (3R)-3-hydroxytetradecanoyl-[acyl-carrier-protein] and UDP-N-acetyl-alpha-D-glucosamine: step 2/6. Functionally, catalyzes the hydrolysis of UDP-3-O-myristoyl-N-acetylglucosamine to form UDP-3-O-myristoylglucosamine and acetate, the committed step in lipid A biosynthesis. This Glaesserella parasuis serovar 5 (strain SH0165) (Haemophilus parasuis) protein is UDP-3-O-acyl-N-acetylglucosamine deacetylase.